Here is a 593-residue protein sequence, read N- to C-terminus: Melanopsin-A (593 aa).

The Extracellular portion of the chain corresponds to 1-77 (MMSGAAHSVR…VDVPDHAHYT (77 aa)). Residues 78 to 98 (IGAVILTVGITGMLGNFLVIY) traverse the membrane as a helical segment. At 99–112 (AFSRSRTLRTPANL) the chain is on the cytoplasmic side. A helical membrane pass occupies residues 113-133 (FIINLAITDFLMCATQAPIFF). The Extracellular portion of the chain corresponds to 134 to 150 (TTSMHKRWIFGEKGCEL). Cys-148 and Cys-226 are oxidised to a cystine. The chain crosses the membrane as a helical span at residues 151-171 (YAFCGALFGICSMITLMVIAV). Topologically, residues 172–191 (DRYFVITRPLASIGVLSQKR) are cytoplasmic. Residues 192–212 (ALLILLVAWVYSLGWSLPPFF) form a helical membrane-spanning segment. Topologically, residues 213-243 (GWSAYVPEGLLTSCTWDYMTFTPSVRAYTML) are extracellular. Residues 244–264 (LFIFVFFIPLIVIIYCYFFIF) form a helical membrane-spanning segment. The Cytoplasmic segment spans residues 265-300 (RSIRTTNEAVGKINGDNKRDSMKRFQRLKNEWKMAK). The chain crosses the membrane as a helical span at residues 301–321 (IALIVILMYVISWSPYSTVAL). Topologically, residues 322–336 (TAFAGYSDFLTPYMN) are extracellular. A helical transmembrane segment spans residues 337-357 (SVPAVIAKASAIHNPIIYAIT). Position 344 is an N6-(retinylidene)lysine (Lys-344). The Cytoplasmic segment spans residues 358–593 (HPKYRLAIAK…HIDNHRPQYL (236 aa)). Disordered regions lie at residues 397 to 449 (TVTS…RQVS) and 547 to 593 (RSNV…PQYL). The segment covering 414-449 (TGKSRLSSASDSESGWTDTEADLSSMSSRPASRQVS) has biased composition (polar residues). Residues 581-593 (ESGHIDNHRPQYL) show a composition bias toward basic and acidic residues.

The protein belongs to the G-protein coupled receptor 1 family. Opsin subfamily.

Its subcellular location is the cell membrane. Its function is as follows. Photoreceptor implicated in non-image-forming responses to light. May be able to isomerize covalently bound all-trans retinal back to 11-cis retinal. This is Melanopsin-A (opn4a) from Danio rerio (Zebrafish).